The sequence spans 164 residues: FMN reductase (NADH) RutF (164 aa).

It belongs to the non-flavoprotein flavin reductase family. RutF subfamily.

The catalysed reaction is FMNH2 + NAD(+) = FMN + NADH + 2 H(+). In terms of biological role, catalyzes the reduction of FMN to FMNH2 which is used to reduce pyrimidine by RutA via the Rut pathway. The chain is FMN reductase (NADH) RutF from Enterobacter sp. (strain 638).